The sequence spans 200 residues: Probable molybdenum cofactor guanylyltransferase (200 aa).

GTP is bound by residues 9–11 (LAG), Lys-21, Asp-69, and Asp-100. Asp-100 contributes to the Mg(2+) binding site.

This sequence belongs to the MobA family. Requires Mg(2+) as cofactor.

It localises to the cytoplasm. It catalyses the reaction Mo-molybdopterin + GTP + H(+) = Mo-molybdopterin guanine dinucleotide + diphosphate. Its function is as follows. Transfers a GMP moiety from GTP to Mo-molybdopterin (Mo-MPT) cofactor (Moco or molybdenum cofactor) to form Mo-molybdopterin guanine dinucleotide (Mo-MGD) cofactor. This chain is Probable molybdenum cofactor guanylyltransferase, found in Bacillus cereus (strain ZK / E33L).